Reading from the N-terminus, the 370-residue chain is UDP-N-acetylglucosamine--N-acetylmuramyl-(pentapeptide) pyrophosphoryl-undecaprenol N-acetylglucosamine transferase (370 aa).

UDP-N-acetyl-alpha-D-glucosamine is bound by residues 15 to 17 (TGG), N129, R170, S200, I253, and Q298.

This sequence belongs to the glycosyltransferase 28 family. MurG subfamily.

It is found in the cell inner membrane. The catalysed reaction is di-trans,octa-cis-undecaprenyl diphospho-N-acetyl-alpha-D-muramoyl-L-alanyl-D-glutamyl-meso-2,6-diaminopimeloyl-D-alanyl-D-alanine + UDP-N-acetyl-alpha-D-glucosamine = di-trans,octa-cis-undecaprenyl diphospho-[N-acetyl-alpha-D-glucosaminyl-(1-&gt;4)]-N-acetyl-alpha-D-muramoyl-L-alanyl-D-glutamyl-meso-2,6-diaminopimeloyl-D-alanyl-D-alanine + UDP + H(+). The protein operates within cell wall biogenesis; peptidoglycan biosynthesis. Functionally, cell wall formation. Catalyzes the transfer of a GlcNAc subunit on undecaprenyl-pyrophosphoryl-MurNAc-pentapeptide (lipid intermediate I) to form undecaprenyl-pyrophosphoryl-MurNAc-(pentapeptide)GlcNAc (lipid intermediate II). The chain is UDP-N-acetylglucosamine--N-acetylmuramyl-(pentapeptide) pyrophosphoryl-undecaprenol N-acetylglucosamine transferase from Salinibacter ruber (strain DSM 13855 / M31).